The chain runs to 492 residues: N-succinylglutamate 5-semialdehyde dehydrogenase (492 aa).

220 to 225 (GSANTG) is an NAD(+) binding site. Residues glutamate 243 and cysteine 277 contribute to the active site.

The protein belongs to the aldehyde dehydrogenase family. AstD subfamily.

The catalysed reaction is N-succinyl-L-glutamate 5-semialdehyde + NAD(+) + H2O = N-succinyl-L-glutamate + NADH + 2 H(+). It participates in amino-acid degradation; L-arginine degradation via AST pathway; L-glutamate and succinate from L-arginine: step 4/5. Its function is as follows. Catalyzes the NAD-dependent reduction of succinylglutamate semialdehyde into succinylglutamate. The protein is N-succinylglutamate 5-semialdehyde dehydrogenase of Escherichia coli (strain K12 / MC4100 / BW2952).